A 70-amino-acid chain; its full sequence is Movement protein TGBp3 (70 aa).

The Lumenal portion of the chain corresponds to 1-6 (MEANTY). The chain crosses the membrane as a helical span at residues 7 to 27 (LNAIILVLVVTIIAVISTSLV). Residues 28 to 70 (RTEPCVIKITGESITVLACKLDAETIRAIADLKPLSVERLSFH) are Cytoplasmic-facing.

Belongs to the Tymovirales TGBp3 protein family.

It is found in the host endoplasmic reticulum membrane. Plays a role in viral cell-to-cell propagation, by facilitating genome transport to neighboring plant cells through plasmosdesmata. May induce the formation of granular vesicles derived from the Endoplasmic reticulum, which align on actin filaments. This chain is Movement protein TGBp3, found in Potato virus X (PVX).